The chain runs to 296 residues: MYLSLLKSLNRLSPRAWDFIQLTRIDKPIGVYLLLWPTLWAVWIAGKGAPSLQTVCIFVLGVFLMRAAGCVINDFADRKVDGHVKRTEQRPLVSGKVSPREALVLFAVLVGLSFVLVLFTNAATIWLSFGGLALAASYPFMKRYTYYPQVVLGAAFSWGMPMAFTAETGELPAAAWLLYIANLLWTVGYDTYYAMVDRDDDLKIGVKSTAVLFGDADRVIILTLQGLALGCLMLAGARFELGACFYIGLLAAAGCFAWEFWSTRERERDACFKAFLHNHWAGLAIFLGIVADYAVR.

8 helical membrane-spanning segments follow: residues Ile-29–Ala-49, Leu-52–Ile-72, Ala-102–Ala-122, Tyr-146–Ala-166, Gly-169–Tyr-189, Val-219–Phe-239, Leu-241–Trp-261, and Phe-275–Val-295.

The protein belongs to the UbiA prenyltransferase family. The cofactor is Mg(2+).

The protein resides in the cell inner membrane. The enzyme catalyses all-trans-octaprenyl diphosphate + 4-hydroxybenzoate = 4-hydroxy-3-(all-trans-octaprenyl)benzoate + diphosphate. The protein operates within cofactor biosynthesis; ubiquinone biosynthesis. Functionally, catalyzes the prenylation of para-hydroxybenzoate (PHB) with an all-trans polyprenyl group. Mediates the second step in the final reaction sequence of ubiquinone-8 (UQ-8) biosynthesis, which is the condensation of the polyisoprenoid side chain with PHB, generating the first membrane-bound Q intermediate 3-octaprenyl-4-hydroxybenzoate. This is 4-hydroxybenzoate octaprenyltransferase from Pseudomonas syringae pv. syringae (strain B728a).